The chain runs to 219 residues: Vesicle-associated membrane protein 712 (219 aa).

Topologically, residues 1-189 (MSILYALVAR…NNTVWWRNCK (189 aa)) are cytoplasmic. Positions 7–111 (LVARGTVVLA…AMNDEFSRVL (105 aa)) constitute a Longin domain. Residues 126–186 (TISRIKGEMN…RRFNNTVWWR (61 aa)) form the v-SNARE coiled-coil homology domain. Residues 190-210 (LTLLLILVLLVIIYIGVAFAC) traverse the membrane as a helical; Anchor for type IV membrane protein segment. Over 211–219 (HGPTLPSCV) the chain is Vesicular.

This sequence belongs to the synaptobrevin family. Expressed in flowers, leaves, stems and roots.

The protein localises to the vacuole membrane. The protein resides in the prevacuolar compartment membrane. Functionally, involved in the targeting and/or fusion of transport vesicles to their target membrane. This Arabidopsis thaliana (Mouse-ear cress) protein is Vesicle-associated membrane protein 712.